The chain runs to 98 residues: Ribonuclease P protein component 4 (98 aa).

Zn(2+) contacts are provided by C62, C65, C85, and C88.

This sequence belongs to the eukaryotic/archaeal RNase P protein component 4 family. In terms of assembly, consists of a catalytic RNA component and at least 4-5 protein subunits. The cofactor is Zn(2+).

It is found in the cytoplasm. The enzyme catalyses Endonucleolytic cleavage of RNA, removing 5'-extranucleotides from tRNA precursor.. Its function is as follows. Part of ribonuclease P, a protein complex that generates mature tRNA molecules by cleaving their 5'-ends. This chain is Ribonuclease P protein component 4, found in Thermoplasma volcanium (strain ATCC 51530 / DSM 4299 / JCM 9571 / NBRC 15438 / GSS1).